Here is a 165-residue protein sequence, read N- to C-terminus: Ribosome maturation factor RimM (165 aa).

In terms of domain architecture, PRC barrel spans 94–165 (EDEFYIADLN…YVVLNYQREI (72 aa)).

This sequence belongs to the RimM family. Binds ribosomal protein uS19.

Its subcellular location is the cytoplasm. Its function is as follows. An accessory protein needed during the final step in the assembly of 30S ribosomal subunit, possibly for assembly of the head region. Essential for efficient processing of 16S rRNA. May be needed both before and after RbfA during the maturation of 16S rRNA. It has affinity for free ribosomal 30S subunits but not for 70S ribosomes. The sequence is that of Ribosome maturation factor RimM from Rickettsia felis (strain ATCC VR-1525 / URRWXCal2) (Rickettsia azadi).